Here is a 762-residue protein sequence, read N- to C-terminus: 5-methyltetrahydropteroyltriglutamate--homocysteine methyltransferase (762 aa).

5-methyltetrahydropteroyltri-L-glutamate-binding positions include 17-20 (REWK) and Lys-111. L-homocysteine is bound by residues 435–437 (IGS) and Glu-488. Residues 435 to 437 (IGS) and Glu-488 each bind L-methionine. 5-methyltetrahydropteroyltri-L-glutamate is bound by residues 519–520 (RC) and Trp-565. Asp-603 lines the L-homocysteine pocket. Asp-603 is an L-methionine binding site. Glu-609 lines the 5-methyltetrahydropteroyltri-L-glutamate pocket. Residues His-645, Cys-647, and Glu-669 each contribute to the Zn(2+) site. His-698 (proton donor) is an active-site residue. Cys-730 is a binding site for Zn(2+).

It belongs to the vitamin-B12 independent methionine synthase family. Zn(2+) serves as cofactor.

The catalysed reaction is 5-methyltetrahydropteroyltri-L-glutamate + L-homocysteine = tetrahydropteroyltri-L-glutamate + L-methionine. It functions in the pathway amino-acid biosynthesis; L-methionine biosynthesis via de novo pathway; L-methionine from L-homocysteine (MetE route): step 1/1. Its function is as follows. Catalyzes the transfer of a methyl group from 5-methyltetrahydrofolate to homocysteine resulting in methionine formation. The chain is 5-methyltetrahydropteroyltriglutamate--homocysteine methyltransferase from Bacillus cereus (strain G9842).